A 209-amino-acid polypeptide reads, in one-letter code: Pyridoxal 5'-phosphate synthase subunit PdxT (209 aa).

Residue 58–60 (GES) coordinates L-glutamine. Cys-90 functions as the Nucleophile in the catalytic mechanism. L-glutamine-binding positions include Arg-119 and 148–149 (IR). Active-site charge relay system residues include His-185 and Glu-187.

Belongs to the glutaminase PdxT/SNO family. In terms of assembly, in the presence of PdxS, forms a dodecamer of heterodimers. Only shows activity in the heterodimer.

It carries out the reaction aldehydo-D-ribose 5-phosphate + D-glyceraldehyde 3-phosphate + L-glutamine = pyridoxal 5'-phosphate + L-glutamate + phosphate + 3 H2O + H(+). It catalyses the reaction L-glutamine + H2O = L-glutamate + NH4(+). Its pathway is cofactor biosynthesis; pyridoxal 5'-phosphate biosynthesis. Catalyzes the hydrolysis of glutamine to glutamate and ammonia as part of the biosynthesis of pyridoxal 5'-phosphate. The resulting ammonia molecule is channeled to the active site of PdxS. The protein is Pyridoxal 5'-phosphate synthase subunit PdxT of Clavibacter michiganensis subsp. michiganensis (strain NCPPB 382).